Reading from the N-terminus, the 185-residue chain is ATP synthase subunit b (185 aa).

Residues 28–48 (VVLVGFAVLMYIVVKFVVPMF) form a helical membrane-spanning segment.

The protein belongs to the ATPase B chain family. In terms of assembly, F-type ATPases have 2 components, F(1) - the catalytic core - and F(0) - the membrane proton channel. F(1) has five subunits: alpha(3), beta(3), gamma(1), delta(1), epsilon(1). F(0) has three main subunits: a(1), b(2) and c(10-14). The alpha and beta chains form an alternating ring which encloses part of the gamma chain. F(1) is attached to F(0) by a central stalk formed by the gamma and epsilon chains, while a peripheral stalk is formed by the delta and b chains.

The protein localises to the cell membrane. Its function is as follows. F(1)F(0) ATP synthase produces ATP from ADP in the presence of a proton or sodium gradient. F-type ATPases consist of two structural domains, F(1) containing the extramembraneous catalytic core and F(0) containing the membrane proton channel, linked together by a central stalk and a peripheral stalk. During catalysis, ATP synthesis in the catalytic domain of F(1) is coupled via a rotary mechanism of the central stalk subunits to proton translocation. In terms of biological role, component of the F(0) channel, it forms part of the peripheral stalk, linking F(1) to F(0). The polypeptide is ATP synthase subunit b (Paenarthrobacter aurescens (strain TC1)).